Consider the following 383-residue polypeptide: Mannitol-1-phosphate 5-dehydrogenase (383 aa).

Residue 3 to 14 (AVHFGAGNIGRG) participates in NAD(+) binding.

Belongs to the mannitol dehydrogenase family.

The enzyme catalyses D-mannitol 1-phosphate + NAD(+) = beta-D-fructose 6-phosphate + NADH + H(+). In Lacticaseibacillus casei (strain BL23) (Lactobacillus casei), this protein is Mannitol-1-phosphate 5-dehydrogenase.